Reading from the N-terminus, the 334-residue chain is MAVFTTVSQDEIARWLLDFDLGEVRELRGIASGIENSNFFLTMEHEGQTRQYVLTIFERLSFTQLPYYLHLMAHLAERGIRVPAPIPARDGEILRPLKGKPATIVTRLPGASQLAPDAQHCAEVGDMLARMHLAGADYPRRQPNLRSLPWWQQTEREILPFLDAGQRALLQREIAHQAAFFASAAYASLGEGPCHCDLFRDNALFEEDASGRHRLGGFFDFYFAGNDKWLFDVAVTVNDWCIDLATGELDAERAQALLRAYHAVRPLTETEAAHWQDMLRAGALRFWVSRLWDFYLPREADMLQPHDPTHFERILRRRLDAQPANPESAPLPWI.

It belongs to the pseudomonas-type ThrB family.

It catalyses the reaction L-homoserine + ATP = O-phospho-L-homoserine + ADP + H(+). It functions in the pathway amino-acid biosynthesis; L-threonine biosynthesis; L-threonine from L-aspartate: step 4/5. In Cupriavidus taiwanensis (strain DSM 17343 / BCRC 17206 / CCUG 44338 / CIP 107171 / LMG 19424 / R1) (Ralstonia taiwanensis (strain LMG 19424)), this protein is Homoserine kinase.